The chain runs to 404 residues: Argininosuccinate synthase (404 aa).

ATP is bound at residue 9-17 (AYSGGLDTS). Residue Tyr86 participates in L-citrulline binding. Residue Gly116 coordinates ATP. Residues Thr118, Asn122, and Asp123 each contribute to the L-aspartate site. Asn122 serves as a coordination point for L-citrulline. L-citrulline is bound by residues Arg126, Ser174, Ser183, Glu259, and Tyr271.

Belongs to the argininosuccinate synthase family. Type 1 subfamily. Homotetramer.

It localises to the cytoplasm. The enzyme catalyses L-citrulline + L-aspartate + ATP = 2-(N(omega)-L-arginino)succinate + AMP + diphosphate + H(+). The protein operates within amino-acid biosynthesis; L-arginine biosynthesis; L-arginine from L-ornithine and carbamoyl phosphate: step 2/3. The polypeptide is Argininosuccinate synthase (Listeria monocytogenes serovar 1/2a (strain ATCC BAA-679 / EGD-e)).